We begin with the raw amino-acid sequence, 210 residues long: Urease accessory protein UreF (210 aa).

The protein belongs to the UreF family. UreD, UreF and UreG form a complex that acts as a GTP-hydrolysis-dependent molecular chaperone, activating the urease apoprotein by helping to assemble the nickel containing metallocenter of UreC. The UreE protein probably delivers the nickel.

The protein localises to the cytoplasm. Required for maturation of urease via the functional incorporation of the urease nickel metallocenter. This chain is Urease accessory protein UreF, found in Cereibacter sphaeroides (strain KD131 / KCTC 12085) (Rhodobacter sphaeroides).